The chain runs to 249 residues: Probable proteasome subunit alpha type-2 (249 aa).

This sequence belongs to the peptidase T1A family. The 26S proteasome consists of a 20S proteasome core and two 19S regulatory subunits. The 20S proteasome core is composed of 28 subunits that are arranged in four stacked rings, resulting in a barrel-shaped structure. The two end rings are each formed by seven alpha subunits, and the two central rings are each formed by seven beta subunits. The catalytic chamber with the active sites is on the inside of the barrel.

The protein localises to the cytoplasm. Its subcellular location is the nucleus. The proteasome is a multicatalytic proteinase complex which is characterized by its ability to cleave peptides with Arg, Phe, Tyr, Leu, and Glu adjacent to the leaving group at neutral or slightly basic pH. The proteasome has an ATP-dependent proteolytic activity. The chain is Probable proteasome subunit alpha type-2 (pca-2) from Neurospora crassa (strain ATCC 24698 / 74-OR23-1A / CBS 708.71 / DSM 1257 / FGSC 987).